We begin with the raw amino-acid sequence, 334 residues long: Homoserine O-acetyltransferase (334 aa).

In terms of domain architecture, AB hydrolase-1 spans 61 to 318; the sequence is LVLHALTGDS…GSIHGHDAFL (258 aa). Serine 148 acts as the Nucleophile in catalysis. Arginine 205 is a binding site for substrate. Residues aspartate 285 and histidine 314 contribute to the active site. Aspartate 315 provides a ligand contact to substrate.

This sequence belongs to the AB hydrolase superfamily. MetX family. Homodimer.

The protein resides in the cytoplasm. The enzyme catalyses L-homoserine + acetyl-CoA = O-acetyl-L-homoserine + CoA. It functions in the pathway amino-acid biosynthesis; L-methionine biosynthesis via de novo pathway; O-acetyl-L-homoserine from L-homoserine: step 1/1. Transfers an acetyl group from acetyl-CoA to L-homoserine, forming acetyl-L-homoserine. This chain is Homoserine O-acetyltransferase, found in Deinococcus radiodurans (strain ATCC 13939 / DSM 20539 / JCM 16871 / CCUG 27074 / LMG 4051 / NBRC 15346 / NCIMB 9279 / VKM B-1422 / R1).